We begin with the raw amino-acid sequence, 459 residues long: GTPase Der (459 aa).

EngA-type G domains lie at 3–167 (FTLA…PEPV) and 188–363 (IRVA…AVWN). Residues 9 to 16 (GRPNVGKS), 56 to 60 (DTAGL), 119 to 122 (NKSE), 194 to 201 (GRPNAGKS), 241 to 245 (DTAGL), and 306 to 309 (NKWD) each bind GTP. The KH-like domain occupies 364 to 448 (RRVPTAALNR…PVRITLREKA (85 aa)).

The protein belongs to the TRAFAC class TrmE-Era-EngA-EngB-Septin-like GTPase superfamily. EngA (Der) GTPase family. In terms of assembly, associates with the 50S ribosomal subunit.

Functionally, GTPase that plays an essential role in the late steps of ribosome biogenesis. In Rhodopseudomonas palustris (strain TIE-1), this protein is GTPase Der.